The primary structure comprises 119 residues: Achromolysin (119 aa).

The protein belongs to the peptidase M4 family. Requires Ca(2+) as cofactor. It depends on Zn(2+) as a cofactor.

It is found in the secreted. In terms of biological role, has staphylolytic activity. The protein is Achromolysin of Achromobacter lyticus.